The following is a 266-amino-acid chain: 15-hydroxyprostaglandin dehydrogenase [NAD(+)] (266 aa).

Residues Gly12–Ala20, Asp36–Trp37, Cys63–Val65, and Asn91 contribute to the NAD(+) site. Ser138 and Gln148 together coordinate substrate. Tyr151 (proton acceptor) is an active-site residue. NAD(+) contacts are provided by residues Tyr151–Lys155 and Val186–Thr188.

It belongs to the short-chain dehydrogenases/reductases (SDR) family. As to quaternary structure, homodimer. Detected in colon epithelium (at protein level).

The protein localises to the cytoplasm. The catalysed reaction is prostaglandin E2 + NAD(+) = 15-oxoprostaglandin E2 + NADH + H(+). It catalyses the reaction (15S)-hydroxy-(5Z,8Z,11Z,13E)-eicosatetraenoate + NAD(+) = 15-oxo-(5Z,8Z,11Z,13E)-eicosatetraenoate + NADH + H(+). The enzyme catalyses (11R)-hydroxy-(5Z,8Z,12E,14Z)-eicosatetraenoate + NAD(+) = 11-oxo-(5Z,8Z,12E,14Z)-eicosatetraenoate + NADH + H(+). It carries out the reaction lipoxin A4 + NAD(+) = 15-oxo-(5S,6R)-dihydroxy-(7E,9E,11Z,13E)-eicosatetraenoate + NADH + H(+). The catalysed reaction is 15-oxo-(5S,6R)-dihydroxy-(7E,9E,11Z)-eicosatrienoate + NADH + H(+) = (5S,6R,15S)-trihydroxy-(7E,9E,11Z)-eicosatrienoate + NAD(+). It catalyses the reaction prostaglandin A1 + NAD(+) = 15-oxo-prostaglandin A1 + NADH + H(+). The enzyme catalyses prostaglandin E1 + NAD(+) = 15-oxoprostaglandin E1 + NADH + H(+). It carries out the reaction 14-hydroxy-(4Z,7Z,10Z,12E,16Z,19Z)-docosahexaenoate + NAD(+) = 14-oxo-(4Z,7Z,10Z,12E,16Z,19Z)-docosahexaenoate + NADH + H(+). The catalysed reaction is resolvin E1 + NAD(+) = 18-oxo-resolvin E1 + NADH + H(+). It catalyses the reaction resolvin D1 + NAD(+) = 8-oxoresolvin D1 + NADH + H(+). The enzyme catalyses resolvin D1 + NAD(+) = 17-oxoresolvin D1 + NADH + H(+). It carries out the reaction resolvin D2 + NAD(+) = 7-oxoresolvin D2 + NADH + H(+). The catalysed reaction is resolvin D2 + NAD(+) = 16-oxoresolvin D2 + NADH + H(+). In terms of biological role, catalyzes the NAD-dependent dehydrogenation (oxidation) of a broad array of hydroxylated polyunsaturated fatty acids (mainly eicosanoids and docosanoids, including prostaglandins, lipoxins and resolvins), yielding their corresponding keto (oxo) metabolites. Decreases the levels of the pro-proliferative prostaglandins such as prostaglandin E2 (whose activity is increased in cancer because of an increase in the expression of cyclooxygenase 2) and generates oxo-fatty acid products that can profoundly influence cell function by abrogating pro-inflammatory cytokine expression. Converts resolvins E1, D1 and D2 to their oxo products, which represents a mode of resolvin inactivation. Resolvin E1 plays important roles during the resolution phase of acute inflammation, while resolvins D1 and D2 have a unique role in obesity-induced adipose inflammation. The chain is 15-hydroxyprostaglandin dehydrogenase [NAD(+)] from Homo sapiens (Human).